The following is a 646-amino-acid chain: Leukotriene A-4 hydrolase homolog (646 aa).

A peptide is bound by residues 172-174 and 307-312; these read QCQ and PYGGME. Residue histidine 336 coordinates Zn(2+). Glutamate 337 (proton acceptor) is an active-site residue. The Zn(2+) site is built by histidine 340 and glutamate 359. Residue tyrosine 424 is the Proton donor of the active site.

Belongs to the peptidase M1 family. The cofactor is Zn(2+).

It localises to the cytoplasm. The protein localises to the nucleus. It carries out the reaction leukotriene A4 + H2O = leukotriene B4. It functions in the pathway lipid metabolism; leukotriene B4 biosynthesis. In terms of biological role, aminopeptidase that preferentially cleaves tripeptides. Also has low epoxide hydrolase activity (in vitro). Can hydrolyze an epoxide moiety of LTA(4) to form LTB(4) (in vitro). This Botryotinia fuckeliana (strain B05.10) (Noble rot fungus) protein is Leukotriene A-4 hydrolase homolog.